A 753-amino-acid polypeptide reads, in one-letter code: Metal regulatory transcription factor 1 (753 aa).

Residue Gly2 is modified to N-acetylglycine. Ser5 bears the Phosphoserine mark. Positions Lys133–Lys138 match the Nuclear localization signal motif. 6 consecutive C2H2-type zinc fingers follow at residues Tyr140 to His164, Phe170 to His194, Phe200 to His224, Phe229 to His253, Phe259 to His283, and Phe289 to His313. Ser305 bears the Phosphoserine mark. Disordered regions lie at residues Ser308 to Gly328, Glu395 to Gln466, and Ser648 to Met715. Residues Pro408 to Leu417 show a composition bias toward polar residues. Positions Ser655–Pro666 are enriched in pro residues. Low complexity predominate over residues Ser679–Ser698. The segment covering Gln700–Leu712 has biased composition (polar residues).

The protein localises to the nucleus. It is found in the cytoplasm. Functionally, zinc-dependent transcriptional regulator of cellular adaption to conditions of exposure to heavy metals. Binds to metal responsive elements (MRE) in promoters and activates the transcription of metallothionein genes like metallothionein-2/MT2A. Also regulates the expression of metalloproteases in response to intracellular zinc and functions as a catabolic regulator of cartilages. This Homo sapiens (Human) protein is Metal regulatory transcription factor 1 (MTF1).